The primary structure comprises 459 residues: MAP kinase-interacting serine/threonine-protein kinase 2 (459 aa).

Residues 37 to 67 (DFSPQCEARPDMPSSQPIDIPDAKKRGRKKK) are disordered. The short motif at 60–66 (KKRGRKK) is the Nuclear localization signal element. S74 carries the phosphoserine modification. The 285-residue stretch at 84 to 368 (QLQEDVLGEG…AAQVLQHPWV (285 aa)) folds into the Protein kinase domain. ATP-binding positions include 90-98 (LGEGAHARV) and K113. Position 160–162 (160–162 (EKM)) interacts with staurosporine. D205 serves as the catalytic Proton acceptor. E209 is a staurosporine binding site. 2 positions are modified to phosphothreonine: T244 and T249. The Zn(2+) site is built by C299, C311, and C314. T379 bears the Phosphothreonine mark. Phosphoserine occurs at positions 431 and 434. Positions 438–442 (LAQRR) match the MAP kinase binding motif. S446 is subject to Phosphoserine. A Phosphothreonine modification is found at T450.

It belongs to the protein kinase superfamily. CAMK Ser/Thr protein kinase family. Interacts with ESR2 and EIF4E in the nucleus. Monomer. Interacts with the C-terminal regions of EIF4G1 and EIF4G2; this interaction is promoted when MAPK pathways are repressed but repressed upon ERK proteins activation. Also binds to dephosphorylated MAPK3/ERK1 and MAPK1/ERK2. Interaction with phosphorylated MAPK3/ERK1 and MAPK1/ERK2 protects it from dephosphorylation and inactivation. The cofactor is Mg(2+). It depends on Zn(2+) as a cofactor. In terms of processing, dual phosphorylation of Thr-244 and Thr-249 activates the kinase. Phosphorylation of Thr-379 activates the kinase. Phosphorylated upon arsenic trioxide As(2)O(3) treatment. Phosphorylated by MAPK1/ERK2, MAPK11 and MAPK14. Dephosphorylated by PP2A. Ubiquitously expressed in all tissues examined, with high levels in skeletal muscle and low levels in brain.

The protein localises to the cytoplasm. It is found in the nucleus. Its subcellular location is the PML body. The catalysed reaction is L-seryl-[protein] + ATP = O-phospho-L-seryl-[protein] + ADP + H(+). It carries out the reaction L-threonyl-[protein] + ATP = O-phospho-L-threonyl-[protein] + ADP + H(+). Inhibited by CGP57380 and staurosporine. In terms of biological role, serine/threonine-protein kinase that phosphorylates SFPQ/PSF, HNRNPA1 and EIF4E. May play a role in the response to environmental stress and cytokines. Appears to regulate translation by phosphorylating EIF4E, thus increasing the affinity of this protein for the 7-methylguanosine-containing mRNA cap. Required for mediating PP2A-inhibition-induced EIF4E phosphorylation. Triggers EIF4E shuttling from cytoplasm to nucleus. Enhances the formation of EIF4F complex in pachytene spermatocytes, thus promoting mRNA translation during spermatogenesis. Displays a high basal kinase activity. Acts as a mediator of the suppressive effects of IFNgamma on hematopoiesis. Negative regulator for signals that control generation of arsenic trioxide As(2)O(3)-dependent apoptosis and anti-leukemic responses. Involved in anti-apoptotic signaling in response to serum withdrawal. This chain is MAP kinase-interacting serine/threonine-protein kinase 2 (Mknk2), found in Mus musculus (Mouse).